A 648-amino-acid chain; its full sequence is ABC transporter G family member 14 (648 aa).

One can recognise an ABC transporter domain in the interval 53 to 304 (LKFEEVVYKV…FSSLGFSTSL (252 aa)). 99 to 106 (GPSGSGKT) contacts ATP. An N-linked (GlcNAc...) asparagine glycan is attached at Asn346. One can recognise an ABC transmembrane type-2 domain in the interval 384-590 (YQFTVLLQRG…CYKLLLGIQY (207 aa)). The next 7 membrane-spanning stretches (helical) occupy residues 405-425 (LRIFQVISVAFLGGLLWWHTP), 435-455 (LLFFFSVFWGFYPLYNAVFTF), 485-505 (LPLELALPTAFVFIIYWMGGL), 512-532 (FILSLLVVLYSVLVAQGLGLA), 543-562 (ATTLASVTTLVFLIAGGYYV), 569-591 (IVWLKYLSYSYYCYKLLLGIQYT), and 620-640 (LWIDVFVMGVMLVGYRLMAYM).

It belongs to the ABC transporter superfamily. ABCG family. Eye pigment precursor importer (TC 3.A.1.204) subfamily. As to quaternary structure, forms heterodimers with ABCG11. Accumulates primarily in the pericycle and stelar cells of roots. Expressed in leaves, stems, flowers and siliques, and, at low levels, in roots. Accumulates in the phloem.

The protein localises to the cell membrane. Its function is as follows. Positive regulator of plant growth which acts as an efflux pump involved in the major root-to-shoot (acropetal) long-distance cytokinin (CK) transport via the xylem sap. Together with ABCG9 and ABCG11, required for vascular development by regulating lipid/sterol homeostasis. Involved in CK-dependent responses to oxidative stress such as hydrogen peroxide H(2)O(2). (Microbial infection) Required for SNC1-mediated defense response against the virulent pathogen Pseudomonas syringae pv. tomato DC3000 by promoting the accumulation of trans-zeatin (tZ)-type cytokinins (CK) in the shoot. This is ABC transporter G family member 14 from Arabidopsis thaliana (Mouse-ear cress).